The following is a 498-amino-acid chain: MSNDSSDNQIRRRHHPVLPKGSFQKKDDSIVLEQELSTPKQVNQARPKFPSPITPTLPEMHLPVGNSKFQAVLPSLISPTLPPGFGMASDDSEASLAENDLHPLDNDSTRTSKTLKNSSEVLTASKLTDEGNSKPLLEEGEVAVSSPILLDSKDVIMGVTKSSKNLVEDAHKSKKASTNSSINNMVSTVNSENSNVNNGSSLNGNTSSNLKRKANVTLGDYKRLKVKNKNPSSQELITADVDKTSGSLSEKSEVNHASLKKTYMRLLNSGKMQKKECDKKGKFFEAYAVDAVLCYTVAFHLQNLSNLSRNHPATTSNWRTLPAYIQFLIKEEDKLDPCIQGLFFLLLGIAFREIFHIEVMRIRHSQLNLMRDIKESSSGLTSAKSLGDAQNLCENAVRLYSSYKHYITSMKKGSSLLTIEYISSTAPNTFNEFFVQKKANIPLPLDIDAPIGVTIRFSHNLLNEWIKKQGDVFESKLLKEDIENLQSLEESYPIAQYL.

Disordered stretches follow at residues 1–48 (MSND…ARPK), 99–134 (NDLHPLDNDSTRTSKTLKNSSEVLTASKLTDEGNSK), and 190–209 (NSENSNVNNGSSLNGNTSSN). The span at 35–44 (ELSTPKQVNQ) shows a compositional bias: polar residues. The segment covering 99 to 110 (NDLHPLDNDSTR) has biased composition (basic and acidic residues). The segment covering 111 to 126 (TSKTLKNSSEVLTASK) has biased composition (polar residues).

This is an uncharacterized protein from Schizosaccharomyces pombe (strain 972 / ATCC 24843) (Fission yeast).